Consider the following 82-residue polypeptide: Small ribosomal subunit protein bS16 (82 aa).

Belongs to the bacterial ribosomal protein bS16 family.

This chain is Small ribosomal subunit protein bS16, found in Haemophilus influenzae (strain 86-028NP).